The chain runs to 143 residues: Large ribosomal subunit protein uL13 (143 aa).

It belongs to the universal ribosomal protein uL13 family. As to quaternary structure, part of the 50S ribosomal subunit.

In terms of biological role, this protein is one of the early assembly proteins of the 50S ribosomal subunit, although it is not seen to bind rRNA by itself. It is important during the early stages of 50S assembly. The protein is Large ribosomal subunit protein uL13 of Solibacter usitatus (strain Ellin6076).